The sequence spans 291 residues: Ribosomal large subunit pseudouridine synthase B (291 aa).

One can recognise an S4 RNA-binding domain in the interval 3-75; it reads EKLQKVLARA…ICRVLAYYKP (73 aa). The Nucleophile role is filled by D110. The segment at 256-291 is disordered; the sequence is VEKDRRRMKANQIRRAVKRHSQVSGGRRSGGRNNNG.

It belongs to the pseudouridine synthase RsuA family.

It catalyses the reaction uridine(2605) in 23S rRNA = pseudouridine(2605) in 23S rRNA. Responsible for synthesis of pseudouridine from uracil-2605 in 23S ribosomal RNA. This Escherichia coli (strain K12) protein is Ribosomal large subunit pseudouridine synthase B (rluB).